Here is a 229-residue protein sequence, read N- to C-terminus: Peptidase E (229 aa).

Residues S120, D135, and H157 each act as charge relay system in the active site.

Belongs to the peptidase S51 family.

Its subcellular location is the cytoplasm. The enzyme catalyses Dipeptidase E catalyzes the hydrolysis of dipeptides Asp-|-Xaa. It does not act on peptides with N-terminal Glu, Asn or Gln, nor does it cleave isoaspartyl peptides.. Its function is as follows. Hydrolyzes dipeptides containing N-terminal aspartate residues. May play a role in allowing the cell to use peptide aspartate to spare carbon otherwise required for the synthesis of the aspartate family of amino acids. The chain is Peptidase E from Shigella boydii serotype 18 (strain CDC 3083-94 / BS512).